Consider the following 124-residue polypeptide: uncharacterized protein (124 aa).

Residues 44–92 are disordered; that stretch reads DRVENSGNGTGSISAPLTDLGPSIGDSHENKGADIPIHPPLDTQSHAKD. A compositionally biased stretch (polar residues) spans 48–58; it reads NSGNGTGSISA.

This is an uncharacterized protein from Caenorhabditis elegans.